The chain runs to 250 residues: Trypsin (250 aa).

The first 15 residues, 1 to 15 (MRLLALLLMVGAAVA), serve as a signal peptide directing secretion. Positions 16–22 (VPREDGR) are cleaved as a propeptide — activation peptide. Residues 23–247 (IIGGHECAAH…FLGWIERTLE (225 aa)) enclose the Peptidase S1 domain. 6 disulfides stabilise this stretch: Cys29–Cys163, Cys47–Cys63, Cys133–Cys236, Cys140–Cys209, Cys174–Cys188, and Cys199–Cys223. Catalysis depends on charge relay system residues His62 and Asp106. The active-site Charge relay system is the Ser203.

Belongs to the peptidase S1 family.

It localises to the secreted. Its subcellular location is the extracellular space. It carries out the reaction Preferential cleavage: Arg-|-Xaa, Lys-|-Xaa.. This is Trypsin from Pleuronectes platessa (European plaice).